A 298-amino-acid polypeptide reads, in one-letter code: NAD kinase (298 aa).

Residue D80 is the Proton acceptor of the active site. NAD(+) is bound by residues 80–81 (DG), 154–155 (ND), R182, D184, 195–200 (TAYALS), A219, and Q253.

The protein belongs to the NAD kinase family. A divalent metal cation serves as cofactor.

It is found in the cytoplasm. It catalyses the reaction NAD(+) + ATP = ADP + NADP(+) + H(+). Involved in the regulation of the intracellular balance of NAD and NADP, and is a key enzyme in the biosynthesis of NADP. Catalyzes specifically the phosphorylation on 2'-hydroxyl of the adenosine moiety of NAD to yield NADP. This Acidovorax sp. (strain JS42) protein is NAD kinase.